Consider the following 422-residue polypeptide: Dihydroorotase (422 aa).

2 residues coordinate Zn(2+): H59 and H61. Substrate is bound by residues 61–63 and N93; that span reads HFR. The Zn(2+) site is built by D150, H177, and H230. N276 is a substrate binding site. Residue D303 coordinates Zn(2+). Residue D303 is part of the active site. H307 lines the substrate pocket.

The protein belongs to the metallo-dependent hydrolases superfamily. DHOase family. Class I DHOase subfamily. The cofactor is Zn(2+).

The catalysed reaction is (S)-dihydroorotate + H2O = N-carbamoyl-L-aspartate + H(+). The protein operates within pyrimidine metabolism; UMP biosynthesis via de novo pathway; (S)-dihydroorotate from bicarbonate: step 3/3. Its function is as follows. Catalyzes the reversible cyclization of carbamoyl aspartate to dihydroorotate. The chain is Dihydroorotase from Streptococcus pyogenes serotype M3 (strain ATCC BAA-595 / MGAS315).